The chain runs to 162 residues: Putative 4-hydroxy-4-methyl-2-oxoglutarate aldolase (162 aa).

Residues 75–78 (GDML) and Arg-97 contribute to the substrate site. Asp-98 is a binding site for a divalent metal cation.

This sequence belongs to the class II aldolase/RraA-like family. Homotrimer. The cofactor is a divalent metal cation.

The enzyme catalyses 4-hydroxy-4-methyl-2-oxoglutarate = 2 pyruvate. It carries out the reaction oxaloacetate + H(+) = pyruvate + CO2. Functionally, catalyzes the aldol cleavage of 4-hydroxy-4-methyl-2-oxoglutarate (HMG) into 2 molecules of pyruvate. Also contains a secondary oxaloacetate (OAA) decarboxylase activity due to the common pyruvate enolate transition state formed following C-C bond cleavage in the retro-aldol and decarboxylation reactions. The chain is Putative 4-hydroxy-4-methyl-2-oxoglutarate aldolase from Pseudomonas paraeruginosa (strain DSM 24068 / PA7) (Pseudomonas aeruginosa (strain PA7)).